The primary structure comprises 794 residues: Zinc finger Y-chromosomal protein 1 (794 aa).

A Nuclear localization signal motif is present at residues Thr380–Arg389. C2H2-type zinc fingers lie at residues Tyr411 to His433, Tyr442 to His464, Leu477 to His499, His508 to His531, His537 to His559, Tyr565 to His588, Phe594 to His616, His622 to His645, His651 to His673, His679 to His702, Tyr708 to His730, Tyr736 to His759, and His765 to His788.

The protein belongs to the krueppel C2H2-type zinc-finger protein family. ZFX/ZFY subfamily.

It is found in the nucleus. Functionally, probable transcriptional activator. The chain is Zinc finger Y-chromosomal protein 1 (zfy1) from Xenopus laevis (African clawed frog).